A 462-amino-acid polypeptide reads, in one-letter code: Argininosuccinate lyase (462 aa).

The protein belongs to the lyase 1 family. Argininosuccinate lyase subfamily.

It is found in the cytoplasm. The catalysed reaction is 2-(N(omega)-L-arginino)succinate = fumarate + L-arginine. It functions in the pathway amino-acid biosynthesis; L-arginine biosynthesis; L-arginine from L-ornithine and carbamoyl phosphate: step 3/3. The polypeptide is Argininosuccinate lyase (Dechloromonas aromatica (strain RCB)).